Consider the following 115-residue polypeptide: uncharacterized protein (115 aa).

The segment covering Thr90–Arg100 has biased composition (basic residues). The tract at residues Thr90 to Gly115 is disordered.

This is an uncharacterized protein from Saccharomyces cerevisiae (strain ATCC 204508 / S288c) (Baker's yeast).